The sequence spans 137 residues: Small heat shock protein IbpA (137 aa).

The region spanning 28–137 (SQSNGGYPPY…ANKPRRIEIN (110 aa)) is the sHSP domain.

Belongs to the small heat shock protein (HSP20) family. As to quaternary structure, monomer. Forms homomultimers of about 100-150 subunits at optimal growth temperatures. Conformation changes to monomers at high temperatures or high ionic concentrations.

The protein localises to the cytoplasm. Functionally, associates with aggregated proteins, together with IbpB, to stabilize and protect them from irreversible denaturation and extensive proteolysis during heat shock and oxidative stress. Aggregated proteins bound to the IbpAB complex are more efficiently refolded and reactivated by the ATP-dependent chaperone systems ClpB and DnaK/DnaJ/GrpE. Its activity is ATP-independent. The protein is Small heat shock protein IbpA of Klebsiella pneumoniae (strain 342).